A 412-amino-acid polypeptide reads, in one-letter code: 8-amino-7-oxononanoate synthase (412 aa).

Arg-28 is a substrate binding site. Residue 115 to 116 (GY) participates in pyridoxal 5'-phosphate binding. Residue His-140 participates in substrate binding. Pyridoxal 5'-phosphate contacts are provided by Ser-186, His-214, and Thr-246. The residue at position 249 (Lys-249) is an N6-(pyridoxal phosphate)lysine. Position 367 (Thr-367) interacts with substrate.

This sequence belongs to the class-II pyridoxal-phosphate-dependent aminotransferase family. BioF subfamily. As to quaternary structure, homodimer. Pyridoxal 5'-phosphate serves as cofactor.

It catalyses the reaction 6-carboxyhexanoyl-[ACP] + L-alanine + H(+) = (8S)-8-amino-7-oxononanoate + holo-[ACP] + CO2. It participates in cofactor biosynthesis; biotin biosynthesis. In terms of biological role, catalyzes the decarboxylative condensation of pimeloyl-[acyl-carrier protein] and L-alanine to produce 8-amino-7-oxononanoate (AON), [acyl-carrier protein], and carbon dioxide. This is 8-amino-7-oxononanoate synthase from Paracidovorax citrulli (strain AAC00-1) (Acidovorax citrulli).